Here is a 415-residue protein sequence, read N- to C-terminus: Serine hydroxymethyltransferase (415 aa).

(6S)-5,6,7,8-tetrahydrofolate-binding positions include L117 and 121 to 123 (GHL). N6-(pyridoxal phosphate)lysine is present on K226. E241 serves as a coordination point for (6S)-5,6,7,8-tetrahydrofolate.

This sequence belongs to the SHMT family. In terms of assembly, homodimer. The cofactor is pyridoxal 5'-phosphate.

It is found in the cytoplasm. It carries out the reaction (6R)-5,10-methylene-5,6,7,8-tetrahydrofolate + glycine + H2O = (6S)-5,6,7,8-tetrahydrofolate + L-serine. It functions in the pathway one-carbon metabolism; tetrahydrofolate interconversion. The protein operates within amino-acid biosynthesis; glycine biosynthesis; glycine from L-serine: step 1/1. Functionally, catalyzes the reversible interconversion of serine and glycine with tetrahydrofolate (THF) serving as the one-carbon carrier. This reaction serves as the major source of one-carbon groups required for the biosynthesis of purines, thymidylate, methionine, and other important biomolecules. Also exhibits THF-independent aldolase activity toward beta-hydroxyamino acids, producing glycine and aldehydes, via a retro-aldol mechanism. The sequence is that of Serine hydroxymethyltransferase from Bacillus pumilus (strain SAFR-032).